The primary structure comprises 348 residues: Lipopolysaccharide heptosyltransferase 2 (348 aa).

The protein belongs to the glycosyltransferase 9 family.

The enzyme catalyses an L-alpha-D-Hep-(1-&gt;5)-[alpha-Kdo-(2-&gt;4)]-alpha-Kdo-(2-&gt;6)-lipid A + ADP-L-glycero-beta-D-manno-heptose = an L-alpha-D-Hep-(1-&gt;3)-L-alpha-D-Hep-(1-&gt;5)-[alpha-Kdo-(2-&gt;4)]-alpha-Kdo-(2-&gt;6)-lipid A + ADP + H(+). It participates in bacterial outer membrane biogenesis; LPS core biosynthesis. In terms of biological role, glycosyltransferase involved in the biosynthesis of the core oligosaccharide region of lipopolysaccharide (LPS). Catalyzes the addition of the second heptose unit to the heptosyl-Kdo2-lipid A module. The chain is Lipopolysaccharide heptosyltransferase 2 from Salmonella typhimurium (strain LT2 / SGSC1412 / ATCC 700720).